The following is a 345-amino-acid chain: cAMP-responsive element modulator (345 aa).

A KID domain is found at 88-147; that stretch reads VQVAAIAETDESAESEGVIDSHKRREILSRRPSYRKILNELSSDVPGVPKIEEERSEEEG. Phosphoserine occurs at positions 102, 129, 271, 274, and 277. Residues 286-345 form the bZIP domain; the sequence is TRKRELRLMKNREAAKECRRRKKEYVKCLESRVAVLEVQNKKLIEELETLKDICSPKTDY. The tract at residues 287–312 is basic motif; that stretch reads RKRELRLMKNREAAKECRRRKKEYVK. The segment at 314-335 is leucine-zipper; sequence LESRVAVLEVQNKKLIEELETL.

The protein belongs to the bZIP family. In terms of assembly, binds DNA as a dimer. Interacts with FHL5. Interacts with CDC34. May interact with TSSK4. Post-translationally, isoform 9 is ubiquitinated by CDC34 and RAD6B in order to be degraded by the proteasome. Stimulated by phosphorylation. Phosphorylated on Ser-116 by TSSK4 in vitro. Expressed in testes (round spermatids) (at protein level). Isoform 14 is the major activator form in testes.

It is found in the nucleus. The protein resides in the cytoplasm. Transcriptional regulator that binds the cAMP response element (CRE), a sequence present in many viral and cellular promoters. Isoforms are either transcriptional activators or repressors. Plays a role in spermatogenesis and is involved in spermatid maturation. Functionally, may play a role in the regulation of the circadian clock: acts as a transcriptional repressor of the core circadian component PER1 by directly binding to cAMP response elements in its promoter. This Homo sapiens (Human) protein is cAMP-responsive element modulator.